We begin with the raw amino-acid sequence, 120 residues long: Ribonuclease P protein component (120 aa).

Belongs to the RnpA family. As to quaternary structure, consists of a catalytic RNA component (M1 or rnpB) and a protein subunit.

The catalysed reaction is Endonucleolytic cleavage of RNA, removing 5'-extranucleotides from tRNA precursor.. RNaseP catalyzes the removal of the 5'-leader sequence from pre-tRNA to produce the mature 5'-terminus. It can also cleave other RNA substrates such as 4.5S RNA. The protein component plays an auxiliary but essential role in vivo by binding to the 5'-leader sequence and broadening the substrate specificity of the ribozyme. In Chlamydia trachomatis serovar L2 (strain ATCC VR-902B / DSM 19102 / 434/Bu), this protein is Ribonuclease P protein component.